Consider the following 198-residue polypeptide: Nucleoside triphosphate pyrophosphatase (198 aa).

The active-site Proton acceptor is the D70.

This sequence belongs to the Maf family. A divalent metal cation is required as a cofactor.

It is found in the cytoplasm. The catalysed reaction is a ribonucleoside 5'-triphosphate + H2O = a ribonucleoside 5'-phosphate + diphosphate + H(+). It catalyses the reaction a 2'-deoxyribonucleoside 5'-triphosphate + H2O = a 2'-deoxyribonucleoside 5'-phosphate + diphosphate + H(+). In terms of biological role, nucleoside triphosphate pyrophosphatase. May have a dual role in cell division arrest and in preventing the incorporation of modified nucleotides into cellular nucleic acids. The polypeptide is Nucleoside triphosphate pyrophosphatase (Thermosynechococcus vestitus (strain NIES-2133 / IAM M-273 / BP-1)).